A 451-amino-acid chain; its full sequence is Adenylyltransferase and sulfurtransferase MOCS3-1 (451 aa).

Residues 42–62 are disordered; the sequence is GEDSDEAEESSNDMPTPQTKL. Acidic residues predominate over residues 43-52; it reads EDSDEAEESS. Residue Thr-60 is modified to Phosphothreonine. ATP-binding positions include Gly-99, Asp-120, 127–131, Lys-144, and 188–189; these read SNLHR and DN. Cys-229 and Cys-232 together coordinate Zn(2+). Cys-246 serves as the catalytic Glycyl thioester intermediate; for adenylyltransferase activity. Residues Cys-304 and Cys-307 each contribute to the Zn(2+) site. Residues 353 to 449 enclose the Rhodanese domain; sequence QSQPHLLLDV…WTGSVDATFP (97 aa). Cys-408 acts as the Cysteine persulfide intermediate; for sulfurtransferase activity in catalysis.

This sequence in the N-terminal section; belongs to the HesA/MoeB/ThiF family. UBA4 subfamily. It depends on Zn(2+) as a cofactor.

Its subcellular location is the cytoplasm. The enzyme catalyses [molybdopterin-synthase sulfur-carrier protein]-C-terminal Gly-Gly + ATP + H(+) = [molybdopterin-synthase sulfur-carrier protein]-C-terminal Gly-Gly-AMP + diphosphate. The catalysed reaction is [molybdopterin-synthase sulfur-carrier protein]-C-terminal Gly-Gly-AMP + S-sulfanyl-L-cysteinyl-[cysteine desulfurase] + AH2 = [molybdopterin-synthase sulfur-carrier protein]-C-terminal-Gly-aminoethanethioate + L-cysteinyl-[cysteine desulfurase] + A + AMP + 2 H(+). It participates in tRNA modification; 5-methoxycarbonylmethyl-2-thiouridine-tRNA biosynthesis. The protein operates within cofactor biosynthesis; molybdopterin biosynthesis. Functionally, plays a central role in 2-thiolation of mcm(5)S(2)U at tRNA wobble positions of cytosolic tRNA(Lys), tRNA(Glu) and tRNA(Gln). Also essential during biosynthesis of the molybdenum cofactor. Acts by mediating the C-terminal thiocarboxylation of sulfur carriers URM1 and MOCS2A. Its N-terminus first activates URM1 and MOCS2A as acyl-adenylates (-COAMP), then the persulfide sulfur on the catalytic cysteine is transferred to URM1 and MOCS2A to form thiocarboxylation (-COSH) of their C-terminus. The reaction probably involves hydrogen sulfide that is generated from the persulfide intermediate and that acts as a nucleophile towards URM1 and MOCS2A. Subsequently, a transient disulfide bond is formed. Does not use thiosulfate as sulfur donor; NFS1 probably acting as a sulfur donor for thiocarboxylation reactions. This Drosophila pseudoobscura pseudoobscura (Fruit fly) protein is Adenylyltransferase and sulfurtransferase MOCS3-1.